A 202-amino-acid polypeptide reads, in one-letter code: Probable GTP-binding protein EngB (202 aa).

The EngB-type G domain occupies valine 22–glutamate 197. Residues glycine 30–serine 37, glycine 57–leucine 61, aspartate 75–glycine 78, threonine 142–aspartate 145, and tyrosine 173–serine 178 contribute to the GTP site. Positions 37 and 59 each coordinate Mg(2+).

It belongs to the TRAFAC class TrmE-Era-EngA-EngB-Septin-like GTPase superfamily. EngB GTPase family. Requires Mg(2+) as cofactor.

Functionally, necessary for normal cell division and for the maintenance of normal septation. The polypeptide is Probable GTP-binding protein EngB (Bacteroides thetaiotaomicron (strain ATCC 29148 / DSM 2079 / JCM 5827 / CCUG 10774 / NCTC 10582 / VPI-5482 / E50)).